A 528-amino-acid chain; its full sequence is Putative pumilio homolog 10 (528 aa).

Residues 188-528 form the PUM-HD domain; that stretch reads EGSGASYPDE…KIFSKTILKK (341 aa). 8 Pumilio repeats span residues 213–248, 249–284, 285–323, 325–360, 361–396, 397–433, 434–465, and 466–503; these read EIYG…VIFL, EIID…MIVS, VLTS…ALVK, ALEP…FVVE, AATE…RLVA, EISR…LPFR, THCI…EIVR, and ELLS…RLVE.

It localises to the cytoplasm. Sequence-specific RNA-binding protein that regulates translation and mRNA stability by binding the 3'-UTR of target mRNAs. In Arabidopsis thaliana (Mouse-ear cress), this protein is Putative pumilio homolog 10 (APUM10).